Reading from the N-terminus, the 119-residue chain is Large ribosomal subunit protein bL20 (119 aa).

Belongs to the bacterial ribosomal protein bL20 family.

In terms of biological role, binds directly to 23S ribosomal RNA and is necessary for the in vitro assembly process of the 50S ribosomal subunit. It is not involved in the protein synthesizing functions of that subunit. The protein is Large ribosomal subunit protein bL20 of Lactococcus lactis subsp. cremoris (strain MG1363).